The chain runs to 126 residues: Ribosome-binding factor A (126 aa).

Belongs to the RbfA family. Monomer. Binds 30S ribosomal subunits, but not 50S ribosomal subunits or 70S ribosomes.

It is found in the cytoplasm. Its function is as follows. One of several proteins that assist in the late maturation steps of the functional core of the 30S ribosomal subunit. Associates with free 30S ribosomal subunits (but not with 30S subunits that are part of 70S ribosomes or polysomes). Required for efficient processing of 16S rRNA. May interact with the 5'-terminal helix region of 16S rRNA. This chain is Ribosome-binding factor A, found in Nitrosospira multiformis (strain ATCC 25196 / NCIMB 11849 / C 71).